A 210-amino-acid polypeptide reads, in one-letter code: Thymidylate kinase (210 aa).

10 to 17 is a binding site for ATP; sequence GIDGCGKT.

It belongs to the thymidylate kinase family.

The enzyme catalyses dTMP + ATP = dTDP + ADP. Its function is as follows. Phosphorylation of dTMP to form dTDP in both de novo and salvage pathways of dTTP synthesis. This is Thymidylate kinase from Prochlorococcus marinus (strain MIT 9515).